The primary structure comprises 320 residues: Replication-associated protein ORF2 (320 aa).

Catalysis depends on O-(5'-phospho-DNA)-tyrosine intermediate residues Y188 and Y192.

Belongs to the microviridae Rep protein family.

It carries out the reaction ATP + (deoxyribonucleotide)n-3'-hydroxyl + 5'-phospho-(deoxyribonucleotide)m = (deoxyribonucleotide)n+m + AMP + diphosphate.. In terms of biological role, plays an essential role in viral DNA replication. Binds the origin of replication and cleaves the dsDNA replicative form I (RFI) and becomes covalently bound to it via phosphotyrosine bond, generating the dsDNA replicative form II (RFII). In turn, viral DNA replication initiates at the 3'-OH of the cleavage site. After one round of rolling circle synthesis, protein ORF2 is linked to the newly synthesized ssDNA and joins the ends of the displaced strand to generate a circular single-stranded molecule ready to be packed into a virion. This Spiroplasma virus 4 (SpV4) protein is Replication-associated protein ORF2.